Consider the following 339-residue polypeptide: Serpentine receptor class alpha-20 (339 aa).

6 consecutive transmembrane segments (helical) span residues 30 to 50 (VSFV…VLAI), 113 to 132 (LYFY…SLTF), 151 to 171 (VSIS…YFGL), 199 to 219 (FRTT…YLNV), 249 to 269 (CILI…VNYI), and 284 to 304 (IAPF…VIYF).

This sequence belongs to the nematode receptor-like protein sra family.

The protein resides in the membrane. The polypeptide is Serpentine receptor class alpha-20 (sra-20) (Caenorhabditis elegans).